The chain runs to 288 residues: 5,10-methylenetetrahydrofolate reductase (288 aa).

The FAD site is built by Ala51, His73, Gly106, Asp107, Ala118, Tyr140, His144, and Lys159. Position 107 (Asp107) interacts with (6S)-5-methyl-5,6,7,8-tetrahydrofolate. (6S)-5-methyl-5,6,7,8-tetrahydrofolate is bound at residue Gln175. Gln175 contacts NADH.

It belongs to the methylenetetrahydrofolate reductase family. FAD is required as a cofactor.

It carries out the reaction (6S)-5-methyl-5,6,7,8-tetrahydrofolate + NAD(+) = (6R)-5,10-methylene-5,6,7,8-tetrahydrofolate + NADH + H(+). The protein operates within one-carbon metabolism; tetrahydrofolate interconversion. It participates in amino-acid biosynthesis; L-methionine biosynthesis via de novo pathway. Functionally, catalyzes the NADH-dependent reduction of 5,10-methylenetetrahydrofolate to 5-methyltetrahydrofolate. Is required to provide the methyl group necessary for methionine synthetase to convert homocysteine to methionine; the methyl group is given by 5-methyltetrahydrofolate. Is required for Sphingobium SYK-6 to grow on vanillate or syringate as the sole source of carbon. The chain is 5,10-methylenetetrahydrofolate reductase from Sphingobium sp. (strain NBRC 103272 / SYK-6).